The chain runs to 461 residues: Cysteine--tRNA ligase (461 aa).

Cys-29 lines the Zn(2+) pocket. The short motif at 31 to 41 (MTVYDFCHIGH) is the 'HIGH' region element. 3 residues coordinate Zn(2+): Cys-210, His-235, and Glu-239. The short motif at 267-271 (KMSKS) is the 'KMSKS' region element. Lys-270 is an ATP binding site.

The protein belongs to the class-I aminoacyl-tRNA synthetase family. In terms of assembly, monomer. It depends on Zn(2+) as a cofactor.

The protein resides in the cytoplasm. It catalyses the reaction tRNA(Cys) + L-cysteine + ATP = L-cysteinyl-tRNA(Cys) + AMP + diphosphate. This Ectopseudomonas mendocina (strain ymp) (Pseudomonas mendocina) protein is Cysteine--tRNA ligase.